Reading from the N-terminus, the 1254-residue chain is Protein transport protein Sec31A (1254 aa).

WD repeat units follow at residues 4-47 (KEIN…EIFE), 64-111 (SSPH…AGDS), 120-160 (KHTG…SPMT), 166-206 (QPQE…LIIK), 209-254 (DHSN…SPLK), 258-298 (NHTR…VLYE), and 301-341 (TSTQ…NDNA). Residues 364–383 (TLPPLQLPQQTSPQSTITPL) are compositionally biased toward low complexity. Positions 364–386 (TLPPLQLPQQTSPQSTITPLKKP) are disordered. The stretch at 397-428 (SFAFGGKLVTLDNIKPTAQQPQQTAAHVVHIS) is one WD 8; interaction with SEC13 repeat. 3 disordered regions span residues 818–892 (PMQT…QSPA), 983–1008 (CFQH…GTQH), and 1058–1125 (PPAP…PGAP). The segment covering 832-846 (AQPAAPAVPPQYYQQ) has biased composition (low complexity). Polar residues-rich tracts occupy residues 847 to 863 (GRSA…TPTA) and 872 to 881 (VPSSDPQGDS). Over residues 1080-1091 (QTLQPQQQVPDQ) the composition is skewed to low complexity.

Belongs to the WD repeat SEC31 family. In terms of assembly, COPII is composed of at least 5 proteins: the SEC23/24 complex, the SEC13/31 complex and SAR1. SEC13 and SEC31 make a 2:2 tetramer that forms the edge element of the COPII outer coat. The tetramer self-assembles in multiple copies to form the complete polyhedral cage. Interacts (via WD 8) with SEC13.

It localises to the cytoplasm. The protein resides in the cytoplasmic vesicle. It is found in the COPII-coated vesicle membrane. Its subcellular location is the endoplasmic reticulum membrane. Functionally, component of the coat protein complex II (COPII) which promotes the formation of transport vesicles from the endoplasmic reticulum (ER). The coat has two main functions, the physical deformation of the endoplasmic reticulum membrane into vesicles and the selection of cargo molecules. This is Protein transport protein Sec31A (sec31a) from Danio rerio (Zebrafish).